The sequence spans 687 residues: MGNGERPPARRPDSSGSPPPAADAPAASNHPFSSHDTKHMTSRRLASRTAVAASLSALMLAACGGDDSANAPTAGGAAPLTPAVASPAGPTGSTPGSTPGATTAPAPSSTSAGQLSVDKMAFAQTHVVPSGGLSWTLPNASASLRPISRRDALVLVAIGQADAVQPVLEAWKDGAKLGALALSPPSALPPTESGGRAYANDRWSAVVPAAWMVPGVSFSVSASNYTSSVAQAPVFGTDADVQLTILPFYLFGADDTNSPPLSTTQAPDAATQQEIFAKWPTAELKVRTHPAGRFSLATVVVGPRADRTGAAQPAYPVTALDQQKDGYGVMSAMLTLITNMRTANGDGPLNDQYYAPLIALNSNGQFANLGGGLGGVGSGAAVGDHRYTGIFIHEQGHAFGLNHAGDEYAKGAYPYAGGSLSGSVWGYDPNHREFLDVLVPTTASSYAKCASSHQLDAQGRCYKQDPMQGGAGDQSSGYKFATFSDYNTGRMQAWIASRVLADPASSTGYSKWDSAAQARAPYTPTTDNNGLYGVNQNLPVQAGVPVHTIVVSFSKAGSAGASYIYPPFSYTGNLIATFDPTSAADRQAITVDKGTYPWYCKGTGCDYTLRVTYADGSRTYRVLQGGFRAWWTPTVYDANATNPLSGSSFRVWAINVPGDKRIGKIELLDTPMVWNGMPANPTVLLSR.

Disordered regions lie at residues Met1–Leu45 and Thr73–Ala112. The 269-residue stretch at Pro233–Ala501 folds into the Peptidase M66 domain. His393 contributes to the Zn(2+) binding site. Glu394 is a catalytic residue. Zn(2+) is bound by residues His397 and His403.

The protein belongs to the dictomallein family. Requires Zn(2+) as cofactor.

This is Dictomallein (dtmL) from Burkholderia mallei (strain NCTC 10247).